A 320-amino-acid polypeptide reads, in one-letter code: Mitochondrial thiamine pyrophosphate carrier (320 aa).

Solcar repeat units follow at residues 13-106 (NTKF…LTEL), 116-202 (REFS…LKHL), and 214-309 (NENL…FCNV). The chain crosses the membrane as a helical span at residues 19–39 (AVAGSVSGLVTRALISPFDVI). Residue Ser51 is modified to Phosphoserine. Transmembrane regions (helical) follow at residues 87–107 (ILSI…TELV), 122–142 (FVCG…VDVL), 173–193 (VFYK…GLQF), and 220–240 (LLCG…LDLF). The short motif at 241-246 (KKRLQV) is the Substrate recognition element. The helical transmembrane segment at 293-313 (ALSTGFMFFWYEFFCNVFHCM) threads the bilayer.

The protein belongs to the mitochondrial carrier (TC 2.A.29) family.

Its subcellular location is the mitochondrion membrane. The catalysed reaction is thiamine phosphate(out) + thiamine diphosphate(in) = thiamine phosphate(in) + thiamine diphosphate(out). Mitochondrial transporter mediating uptake of thiamine diphosphate into mitochondria. It is not clear if the antiporter activity is affected by the membrane potential or by the proton electrochemical gradient. The polypeptide is Mitochondrial thiamine pyrophosphate carrier (SLC25A19) (Pongo abelii (Sumatran orangutan)).